A 246-amino-acid polypeptide reads, in one-letter code: Ubiquinone biosynthesis O-methyltransferase (246 aa).

S-adenosyl-L-methionine-binding residues include R40, G70, D91, and M135.

It belongs to the methyltransferase superfamily. UbiG/COQ3 family.

It carries out the reaction a 3-demethylubiquinol + S-adenosyl-L-methionine = a ubiquinol + S-adenosyl-L-homocysteine + H(+). The catalysed reaction is a 3-(all-trans-polyprenyl)benzene-1,2-diol + S-adenosyl-L-methionine = a 2-methoxy-6-(all-trans-polyprenyl)phenol + S-adenosyl-L-homocysteine + H(+). It participates in cofactor biosynthesis; ubiquinone biosynthesis. O-methyltransferase that catalyzes the 2 O-methylation steps in the ubiquinone biosynthetic pathway. This chain is Ubiquinone biosynthesis O-methyltransferase, found in Colwellia psychrerythraea (strain 34H / ATCC BAA-681) (Vibrio psychroerythus).